The sequence spans 353 residues: Phosphoribosylformylglycinamidine cyclo-ligase (353 aa).

This sequence belongs to the AIR synthase family.

Its subcellular location is the cytoplasm. The catalysed reaction is 2-formamido-N(1)-(5-O-phospho-beta-D-ribosyl)acetamidine + ATP = 5-amino-1-(5-phospho-beta-D-ribosyl)imidazole + ADP + phosphate + H(+). Its pathway is purine metabolism; IMP biosynthesis via de novo pathway; 5-amino-1-(5-phospho-D-ribosyl)imidazole from N(2)-formyl-N(1)-(5-phospho-D-ribosyl)glycinamide: step 2/2. The sequence is that of Phosphoribosylformylglycinamidine cyclo-ligase from Dinoroseobacter shibae (strain DSM 16493 / NCIMB 14021 / DFL 12).